The sequence spans 495 residues: Alpha-1B-glycoprotein (495 aa).

A signal peptide spans 1 to 21 (MSMLVVFLLLWGVTWGPVTEA). Ig-like V-type domains follow at residues 22–113 (AIFY…LTGP), 114–206 (KSLP…ELAA), 207–299 (PPPP…PVEL), 300–397 (ILSD…LHVD), and 398–495 (GPPP…VAES). N44 is a glycosylation site (N-linked (GlcNAc...) (complex) asparagine). 5 disulfides stabilise this stretch: C49–C93, C139–C182, C232–C279, C325–C374, and C423–C470. N179 is a glycosylation site (N-linked (GlcNAc...) asparagine). N-linked (GlcNAc...) asparagine glycosylation is found at N363 and N371.

In terms of assembly, interacts with CRISP3. In terms of tissue distribution, plasma.

The protein localises to the secreted. This chain is Alpha-1B-glycoprotein (A1BG), found in Homo sapiens (Human).